The primary structure comprises 128 residues: Holo-[acyl-carrier-protein] synthase (128 aa).

Positions 8 and 60 each coordinate Mg(2+).

It belongs to the P-Pant transferase superfamily. AcpS family. Mg(2+) is required as a cofactor.

It is found in the cytoplasm. The enzyme catalyses apo-[ACP] + CoA = holo-[ACP] + adenosine 3',5'-bisphosphate + H(+). In terms of biological role, transfers the 4'-phosphopantetheine moiety from coenzyme A to a Ser of acyl-carrier-protein. In Anaeromyxobacter sp. (strain K), this protein is Holo-[acyl-carrier-protein] synthase.